Consider the following 954-residue polypeptide: Glycine dehydrogenase (decarboxylating) (954 aa).

At Lys704 the chain carries N6-(pyridoxal phosphate)lysine.

It belongs to the GcvP family. The glycine cleavage system is composed of four proteins: P, T, L and H. The cofactor is pyridoxal 5'-phosphate.

It carries out the reaction N(6)-[(R)-lipoyl]-L-lysyl-[glycine-cleavage complex H protein] + glycine + H(+) = N(6)-[(R)-S(8)-aminomethyldihydrolipoyl]-L-lysyl-[glycine-cleavage complex H protein] + CO2. The glycine cleavage system catalyzes the degradation of glycine. The P protein binds the alpha-amino group of glycine through its pyridoxal phosphate cofactor; CO(2) is released and the remaining methylamine moiety is then transferred to the lipoamide cofactor of the H protein. The protein is Glycine dehydrogenase (decarboxylating) of Rhizobium leguminosarum bv. trifolii (strain WSM2304).